Reading from the N-terminus, the 352-residue chain is Maleylacetate reductase (352 aa).

Belongs to the iron-containing alcohol dehydrogenase family.

It catalyses the reaction 3-oxoadipate + NAD(+) = maleylacetate + NADH + H(+). The catalysed reaction is 3-oxoadipate + NADP(+) = maleylacetate + NADPH + H(+). The protein operates within aromatic compound metabolism; 3-chlorocatechol degradation. In Pseudomonas sp. (strain P51), this protein is Maleylacetate reductase (tcbF).